The following is a 101-amino-acid chain: NADH-quinone oxidoreductase subunit K (101 aa).

Transmembrane regions (helical) follow at residues 4–24 (LTHYLVLGALLFGISAMGIFM), 30–50 (LVLLMSIELMLLAVNFNFIAF), and 61–81 (IFVFFVLTVAAAESAIGLAIM).

This sequence belongs to the complex I subunit 4L family. As to quaternary structure, NDH-1 is composed of 14 different subunits. Subunits NuoA, H, J, K, L, M, N constitute the membrane sector of the complex.

It localises to the cell inner membrane. The enzyme catalyses a quinone + NADH + 5 H(+)(in) = a quinol + NAD(+) + 4 H(+)(out). Its function is as follows. NDH-1 shuttles electrons from NADH, via FMN and iron-sulfur (Fe-S) centers, to quinones in the respiratory chain. The immediate electron acceptor for the enzyme in this species is believed to be ubiquinone. Couples the redox reaction to proton translocation (for every two electrons transferred, four hydrogen ions are translocated across the cytoplasmic membrane), and thus conserves the redox energy in a proton gradient. This is NADH-quinone oxidoreductase subunit K from Neisseria meningitidis serogroup B (strain ATCC BAA-335 / MC58).